A 349-amino-acid chain; its full sequence is uncharacterized protein (349 aa).

Positions 1–16 (MLFKISFLALIASALA) are cleaved as a signal peptide. Topologically, residues 17–326 (MSINSPTNGD…SSSSSSSAAS (310 aa)) are lumenal. Disordered stretches follow at residues 115-190 (ASSS…SSYR) and 243-322 (TNGT…SSSS). Composition is skewed to low complexity over residues 116-176 (SSSS…SSRT), 243-278 (TNGT…TASG), and 289-322 (STND…SSSS). The chain crosses the membrane as a helical span at residues 327-347 (LVSQPVGISAVIAFFAVALSL). At 348-349 (TL) the chain is on the cytoplasmic side.

The protein localises to the endoplasmic reticulum membrane. This is an uncharacterized protein from Schizosaccharomyces pombe (strain 972 / ATCC 24843) (Fission yeast).